Here is a 308-residue protein sequence, read N- to C-terminus: GTP-binding protein gtr1 (308 aa).

GTP-binding residues include Ser-11, Gly-14, Lys-15, Ser-16, Ser-17, Thr-31, Thr-37, Gly-60, His-122, Asp-125, and Ile-159.

The protein belongs to the GTR/RAG GTP-binding protein family. In terms of assembly, component of the GSE complex.

It localises to the vacuole membrane. It is found in the cytoplasm. Its subcellular location is the nucleus. It carries out the reaction GTP + H2O = GDP + phosphate + H(+). Functionally, GTPase involved in activation of the TORC1 signaling pathway, which promotes growth and represses autophagy in nutrient-rich conditions. Also required for TORC1 inactivation during nitrogen starvation. The chain is GTP-binding protein gtr1 (gtr1) from Schizosaccharomyces pombe (strain 972 / ATCC 24843) (Fission yeast).